Reading from the N-terminus, the 336-residue chain is Anthranilate phosphoribosyltransferase (336 aa).

5-phospho-alpha-D-ribose 1-diphosphate is bound by residues G79, 82 to 83 (GD), T87, 89 to 92 (NIST), 107 to 115 (KHGNRCVSS), and A119. G79 lines the anthranilate pocket. S91 is a binding site for Mg(2+). Residue N110 participates in anthranilate binding. R165 provides a ligand contact to anthranilate. D224 and E225 together coordinate Mg(2+).

The protein belongs to the anthranilate phosphoribosyltransferase family. In terms of assembly, homodimer. Mg(2+) is required as a cofactor.

The catalysed reaction is N-(5-phospho-beta-D-ribosyl)anthranilate + diphosphate = 5-phospho-alpha-D-ribose 1-diphosphate + anthranilate. Its pathway is amino-acid biosynthesis; L-tryptophan biosynthesis; L-tryptophan from chorismate: step 2/5. Its function is as follows. Catalyzes the transfer of the phosphoribosyl group of 5-phosphorylribose-1-pyrophosphate (PRPP) to anthranilate to yield N-(5'-phosphoribosyl)-anthranilate (PRA). The sequence is that of Anthranilate phosphoribosyltransferase from Lachnoclostridium phytofermentans (strain ATCC 700394 / DSM 18823 / ISDg) (Clostridium phytofermentans).